The primary structure comprises 478 residues: Growth/differentiation factor 10 (478 aa).

An N-terminal signal peptide occupies residues 1–33; that stretch reads MAHVPARTSPGPGPQLLLLLLPLFLLLLRDVAG. The propeptide occupies 34–368; sequence SHRAPAWSAL…EKTMQKARRK (335 aa). Residues asparagine 118, asparagine 156, and asparagine 281 are each glycosylated (N-linked (GlcNAc...) asparagine). The tract at residues 266-319 is disordered; that stretch reads YDPFPAGDPEPRAAPNNSADPRVRRAAQATGPLQDNELPGLDERPPRAHAQHFH. Intrachain disulfides connect cysteine 376–cysteine 443, cysteine 405–cysteine 475, and cysteine 409–cysteine 477. An N-linked (GlcNAc...) asparagine glycan is attached at asparagine 469.

Belongs to the TGF-beta family. Homodimer or heterodimer. Can form a non-covalent complex of the mature region and the pro-region. In terms of tissue distribution, expressed in femur, brain, lung, skeletal muscle, pancreas and testis.

The protein localises to the secreted. Growth factor involved in osteogenesis and adipogenesis. Plays an inhibitory role in the process of osteoblast differentiation via SMAD2/3 pathway. Plays an inhibitory role in the process of adipogenesis. The sequence is that of Growth/differentiation factor 10 from Homo sapiens (Human).